The sequence spans 91 residues: Small ribosomal subunit protein uS19 (91 aa).

Belongs to the universal ribosomal protein uS19 family.

In terms of biological role, protein S19 forms a complex with S13 that binds strongly to the 16S ribosomal RNA. This is Small ribosomal subunit protein uS19 from Saccharophagus degradans (strain 2-40 / ATCC 43961 / DSM 17024).